An 801-amino-acid chain; its full sequence is Elongation factor G, mitochondrial (801 aa).

Residues 1–24 constitute a mitochondrion transit peptide; that stretch reads MRCPSLARLPHRAISGLTRLPVRL. In terms of domain architecture, tr-type G spans 99–386; the sequence is SRIRNIGIAA…GVIDYLPNPS (288 aa). GTP is bound by residues 108–115, 184–188, and 238–241; these read AHIDSGKT, DTPGH, and NKMD.

This sequence belongs to the TRAFAC class translation factor GTPase superfamily. Classic translation factor GTPase family. EF-G/EF-2 subfamily.

It is found in the mitochondrion. It participates in protein biosynthesis; polypeptide chain elongation. Its function is as follows. Mitochondrial GTPase that catalyzes the GTP-dependent ribosomal translocation step during translation elongation. During this step, the ribosome changes from the pre-translocational (PRE) to the post-translocational (POST) state as the newly formed A-site-bound peptidyl-tRNA and P-site-bound deacylated tRNA move to the P and E sites, respectively. Catalyzes the coordinated movement of the two tRNA molecules, the mRNA and conformational changes in the ribosome. The protein is Elongation factor G, mitochondrial (mef1) of Aspergillus clavatus (strain ATCC 1007 / CBS 513.65 / DSM 816 / NCTC 3887 / NRRL 1 / QM 1276 / 107).